We begin with the raw amino-acid sequence, 162 residues long: Transcription elongation factor GreA (162 aa).

A coiled-coil region spans residues 44 to 72 (ENAEYHAAKEKQSHIERRIAELSDILSRA).

It belongs to the GreA/GreB family.

Its function is as follows. Necessary for efficient RNA polymerase transcription elongation past template-encoded arresting sites. The arresting sites in DNA have the property of trapping a certain fraction of elongating RNA polymerases that pass through, resulting in locked ternary complexes. Cleavage of the nascent transcript by cleavage factors such as GreA or GreB allows the resumption of elongation from the new 3'terminus. GreA releases sequences of 2 to 3 nucleotides. In Nautilia profundicola (strain ATCC BAA-1463 / DSM 18972 / AmH), this protein is Transcription elongation factor GreA.